The primary structure comprises 292 residues: Hypersensitive-induced response protein 4 (292 aa).

A lipid anchor (N-myristoyl glycine) is attached at glycine 2.

In terms of assembly, self-interacts and forms heteromers. Interacts with NB-LRR class of R proteins before R proteins (e.g. RPS2 or RPM1) are activated by the effectors.

The protein localises to the cell membrane. The chain is Hypersensitive-induced response protein 4 (HIR4) from Arabidopsis thaliana (Mouse-ear cress).